Reading from the N-terminus, the 267-residue chain is MASSEETPRSLAGKVALVTGAGRGIGKGIALELAKRGASLVINYNSAEKPAQEVVDEIAKTGSRAVAIKADITKVPEVSRLFQEALQHFGHLDIVVSNSGTEVFKPEEEVTEEDYDRVFNLNTRAQFFIAQHAYVHLRNGGRIVLMSSVAANMSGIPNHALYAGSKAAVEGFTRSFAVDAGHKKITVNAIAPGGVKTDMYDANAWHYVPNGKPGMPMEEIDKGLAAFCPLGRVAVPQDIGRVVAFLAHPDSEWVNGQVILLTGGSVT.

Residues Ile-25, Asn-45, Asp-71, and Asn-98 each contribute to the NADP(+) site. Catalysis depends on proton donor residues Ser-147 and Ser-148. NADP(+) contacts are provided by Tyr-162, Lys-166, Val-195, and Thr-197. Catalysis depends on Tyr-162, which acts as the Proton acceptor. Lys-166 serves as the catalytic Lowers pKa of active site Tyr.

The protein belongs to the short-chain dehydrogenases/reductases (SDR) family.

Hydroxynaphthalene reductase-like protein; part of the Pks2 gene cluster that mediates the formation of infectious structures (appressoria), enabling these fungi to kill insects faster. The product of the Pks2 gene cluster is different from the one of Pks1 and has still not been identified. The chain is Hydroxynaphthalene reductase-like protein Arp2 from Metarhizium anisopliae (strain ARSEF 549).